Here is a 231-residue protein sequence, read N- to C-terminus: Phosphoheptose isomerase (231 aa).

Positions 35–190 (LAAVLGGGGR…CAAFDAALER (156 aa)) constitute an SIS domain. Substrate is bound at residue 50 to 52 (NGG). Residues H59 and E63 each coordinate Zn(2+). Substrate-binding positions include E63, 92 to 93 (ND), 118 to 120 (STS), S123, and Q170. 2 residues coordinate Zn(2+): Q170 and H178. 2 stretches are compositionally biased toward low complexity: residues 197–206 (AAGSAASTGR) and 214–225 (ASTGRAAGAGRA). The segment at 197–231 (AAGSAASTGRAARRERAASTGRAAGAGRAAQRKRR) is disordered.

The protein belongs to the SIS family. GmhA subfamily. Zn(2+) serves as cofactor.

It localises to the cytoplasm. The catalysed reaction is 2 D-sedoheptulose 7-phosphate = D-glycero-alpha-D-manno-heptose 7-phosphate + D-glycero-beta-D-manno-heptose 7-phosphate. Its pathway is carbohydrate biosynthesis; D-glycero-D-manno-heptose 7-phosphate biosynthesis; D-glycero-alpha-D-manno-heptose 7-phosphate and D-glycero-beta-D-manno-heptose 7-phosphate from sedoheptulose 7-phosphate: step 1/1. Catalyzes the isomerization of sedoheptulose 7-phosphate in D-glycero-D-manno-heptose 7-phosphate. In Streptomyces coelicolor (strain ATCC BAA-471 / A3(2) / M145), this protein is Phosphoheptose isomerase.